The sequence spans 540 residues: Hexose transporter HXT14 (540 aa).

Residues 1–56 (MTAQIPYQHSSGYISHFHNNELDAGRGRDYNVTIKYLDDKEENIEGQAAKISHNAS) lie on the Cytoplasmic side of the membrane. Residues 57–76 (LHIPVLLCLVISLGGFIFGW) form a helical membrane-spanning segment. Residues 77 to 119 (DIGTIGGMTNMVSFQEKFGTTNIIHDDETIFVSTKKLTDLQIG) lie on the Extracellular side of the membrane. The chain crosses the membrane as a helical span at residues 120-140 (LIISIFNISCGVGALTLSKIG). Topologically, residues 141–146 (DWIGRK) are cytoplasmic. The helical transmembrane segment at 147-167 (GGIWFALVVYCIGITIQILSY) threads the bilayer. Over 168 to 177 (GRWYFLTLGR) the chain is Extracellular. Residues 178 to 198 (AVTGIGVGVTTVLVPMFLSEN) traverse the membrane as a helical segment. Over 199–204 (SPLKIR) the chain is Cytoplasmic. A helical transmembrane segment spans residues 205-225 (GSMVSTYQLIVTFGILMGNIL). The Extracellular segment spans residues 226 to 243 (NFICERCYKDPTQNIAWQ). Residues 244-264 (LPLFLGYIWAIIIGMSLVYVP) form a helical membrane-spanning segment. At 265–357 (ESPQYLAKIK…IMAFQQLSGI (93 aa)) the chain is on the cytoplasmic side. A helical transmembrane segment spans residues 358 to 374 (NYFFYYGTSVFKGVGIK). Over 375 to 380 (DPYITS) the chain is Extracellular. Residues 381–398 (IILSSVNFLSTILGIYYV) traverse the membrane as a helical segment. Residues 399–405 (EKWGHKT) lie on the Cytoplasmic side of the membrane. A helical transmembrane segment spans residues 406–426 (CLLYGSTNLLFYMMTYATVGT). The Extracellular segment spans residues 427 to 440 (FGRETDFSNIVLII). The chain crosses the membrane as a helical span at residues 441 to 461 (VTCCFIFWFAITLGPVTFVLV). At 462-478 (SELFPLRTRAISMAICT) the chain is on the cytoplasmic side. The chain crosses the membrane as a helical span at residues 479-499 (FINWMFNFLISLLTPMIVSKI). Position 500 (aspartate 500) is a topological domain, extracellular. A helical transmembrane segment spans residues 501-521 (FKLGYIFAACLLALIIFSWIL). The Cytoplasmic portion of the chain corresponds to 522-540 (VPETRKKNEQEINKIFEPE).

It belongs to the major facilitator superfamily. Sugar transporter (TC 2.A.1.1) family.

It localises to the membrane. Its function is as follows. Probable glucose transporter. In Saccharomyces cerevisiae (strain ATCC 204508 / S288c) (Baker's yeast), this protein is Hexose transporter HXT14 (HXT14).